We begin with the raw amino-acid sequence, 80 residues long: Trefoil factor 3 (80 aa).

Positions 1 to 21 (MAARALCMLGLVLALLSSSSA) are cleaved as a signal peptide. The region spanning 30 to 73 (NQCAVPAKDRVDCGYPHVTPKECNNRGCCFDSRIPGVPWCFKPL) is the P-type domain. Intrachain disulfides connect C32-C58, C42-C57, and C52-C69.

Monomer. Homodimer; disulfide-linked. Expressed in goblet cells of the intestines and colon (at protein level). Expressed by goblet cells of small and large intestinal epithelia and also by the uterus. Also expressed in the hypothalamus where it is detected in paraventricular, periventricular and supraoptic nuclei (at protein level).

It localises to the secreted. Its subcellular location is the extracellular space. The protein resides in the extracellular matrix. The protein localises to the cytoplasm. In terms of biological role, involved in the maintenance and repair of the intestinal mucosa. Promotes the mobility of epithelial cells in healing processes (motogen). This is Trefoil factor 3 (TFF3) from Homo sapiens (Human).